Reading from the N-terminus, the 301-residue chain is Small ribosomal subunit protein uS2 (301 aa).

The interval valine 282 to lysine 301 is disordered. Residues glutamate 289–lysine 301 are compositionally biased toward low complexity.

The protein belongs to the universal ribosomal protein uS2 family.

The protein is Small ribosomal subunit protein uS2 of Koribacter versatilis (strain Ellin345).